We begin with the raw amino-acid sequence, 1400 residues long: Macrophage-stimulating protein receptor (1400 aa).

Residues 1–24 form the signal peptide; it reads MELLPPLPQSFLLLLLLPAKPAAG. Topologically, residues 25–957 are extracellular; it reads EDWQCPRTPY…PGPDGVPQST (933 aa). The region spanning 31–522 is the Sema domain; the sequence is RTPYAASRDF…SGDQVFQVPI (492 aa). Asparagine 66 carries N-linked (GlcNAc...) asparagine glycosylation. Intrachain disulfides connect cysteine 101–cysteine 104, cysteine 107–cysteine 162, cysteine 135–cysteine 143, cysteine 174–cysteine 177, cysteine 300–cysteine 367, cysteine 385–cysteine 407, and cysteine 386–cysteine 422. Asparagine 419, asparagine 458, and asparagine 488 each carry an N-linked (GlcNAc...) asparagine glycan. Cystine bridges form between cysteine 527-cysteine 545, cysteine 533-cysteine 567, cysteine 536-cysteine 552, and cysteine 548-cysteine 558. IPT/TIG domains follow at residues 569–671, 684–767, and 770–860; these read PKLT…FRVD, PVLI…FQYR, and PVVL…FRFL. N-linked (GlcNAc...) asparagine glycans are attached at residues asparagine 654, asparagine 720, asparagine 841, and asparagine 897. Residues 958–978 form a helical membrane-spanning segment; it reads LLGILLPLLLLVAALATALVF. At 979 to 1400 the chain is on the cytoplasmic side; that stretch reads SYWWRRKQLV…RPLSEPPRPT (422 aa). The Protein kinase domain maps to 1082-1345; the sequence is THSDRVIGKG…VLVGEVEQIV (264 aa). Residues 1088-1096, lysine 1114, and 1161-1164 each bind ATP; these read IGKGHFGVV and LPYM. Aspartate 1208 (proton acceptor) is an active-site residue. Residue arginine 1212 coordinates ATP. Phosphotyrosine; by autocatalysis is present on residues tyrosine 1238, tyrosine 1239, tyrosine 1353, and tyrosine 1360. A disordered region spans residues 1367–1400; that stretch reads TSHEMNVRPEQPQFSPMPGNVRRPRPLSEPPRPT.

It belongs to the protein kinase superfamily. Tyr protein kinase family. In terms of assembly, heterodimer of an alpha chain and a beta chain which are disulfide linked. Binds PLXNB1. Associates with and is negatively regulated by HYAL2. Interacts when phosphorylated with downstream effectors including PIK3R1, PCLG1, GRB2 and GAB1. Interacts with integrin beta1/ITGB1 in a ligand-independent fashion. In terms of processing, proteolytic processing yields the two subunits. Post-translationally, autophosphorylated in response to ligand binding on Tyr-1238 and Tyr-1239 in the kinase domain leading to further phosphorylation of Tyr-1353 and Tyr-1360 in the C-terminal multifunctional docking site. Ubiquitinated. Ubiquitination by CBL regulates the receptor stability and activity through proteasomal degradation. In terms of processing, O-mannosylation of IPT/TIG domains on Thr or Ser residues by TMEM260 is required for protein maturation. O-mannosylated residues are composed of single mannose glycans that are not elongated or modified. In terms of tissue distribution, expressed in colon, skin, lung and bone marrow.

It is found in the membrane. The catalysed reaction is L-tyrosyl-[protein] + ATP = O-phospho-L-tyrosyl-[protein] + ADP + H(+). With respect to regulation, in its inactive state, the C-terminal tail interacts with the catalytic domain and inhibits the kinase activity. Upon ligand binding, the C-terminal tail is displaced and becomes phosphorylated, thus increasing the kinase activity. Functionally, receptor tyrosine kinase that transduces signals from the extracellular matrix into the cytoplasm by binding to MST1 ligand. Regulates many physiological processes including cell survival, migration and differentiation. Ligand binding at the cell surface induces autophosphorylation of RON on its intracellular domain that provides docking sites for downstream signaling molecules. Following activation by ligand, interacts with the PI3-kinase subunit PIK3R1, PLCG1 or the adapter GAB1. Recruitment of these downstream effectors by RON leads to the activation of several signaling cascades including the RAS-ERK, PI3 kinase-AKT, or PLCgamma-PKC. RON signaling activates the wound healing response by promoting epithelial cell migration, proliferation as well as survival at the wound site. Also plays a role in the innate immune response by regulating the migration and phagocytic activity of macrophages. Alternatively, RON can also promote signals such as cell migration and proliferation in response to growth factors other than MST1 ligand. This chain is Macrophage-stimulating protein receptor (MST1R), found in Homo sapiens (Human).